We begin with the raw amino-acid sequence, 404 residues long: 1-deoxy-D-xylulose 5-phosphate reductoisomerase (404 aa).

NADPH is bound by residues T5, G6, S7, I8, G31, R32, N33, and N121. Position 122 (K122) interacts with 1-deoxy-D-xylulose 5-phosphate. E123 provides a ligand contact to NADPH. D147 lines the Mn(2+) pocket. 1-deoxy-D-xylulose 5-phosphate-binding residues include S148, E149, S185, and H208. A Mn(2+)-binding site is contributed by E149. Residue G214 coordinates NADPH. 1-deoxy-D-xylulose 5-phosphate-binding residues include S221, N226, K227, and E230. E230 is a binding site for Mn(2+).

The protein belongs to the DXR family. The cofactor is Mg(2+). It depends on Mn(2+) as a cofactor.

The catalysed reaction is 2-C-methyl-D-erythritol 4-phosphate + NADP(+) = 1-deoxy-D-xylulose 5-phosphate + NADPH + H(+). It functions in the pathway isoprenoid biosynthesis; isopentenyl diphosphate biosynthesis via DXP pathway; isopentenyl diphosphate from 1-deoxy-D-xylulose 5-phosphate: step 1/6. In terms of biological role, catalyzes the NADPH-dependent rearrangement and reduction of 1-deoxy-D-xylulose-5-phosphate (DXP) to 2-C-methyl-D-erythritol 4-phosphate (MEP). The protein is 1-deoxy-D-xylulose 5-phosphate reductoisomerase of Prochlorococcus marinus subsp. pastoris (strain CCMP1986 / NIES-2087 / MED4).